Here is a 561-residue protein sequence, read N- to C-terminus: Asparagine synthetase [glutamine-hydrolyzing] (561 aa).

Catalysis depends on Cys2, which acts as the For GATase activity. In terms of domain architecture, Glutamine amidotransferase type-2 spans 2-191 (CGIWALFGSD…PGHYEVLDLK (190 aa)). Residues 49-53 (RLAVV), 75-77 (NGE), and Asp97 each bind L-glutamine. The Asparagine synthetase domain occupies 213 to 536 (HALYDNVEKL…PGRADWLSHY (324 aa)). ATP contacts are provided by residues Leu256, Ile288, and 363–364 (SG). An N6-acetyllysine modification is found at Lys385. Residue Thr545 is modified to Phosphothreonine. A Phosphoserine modification is found at Ser557.

The enzyme catalyses L-aspartate + L-glutamine + ATP + H2O = L-asparagine + L-glutamate + AMP + diphosphate + H(+). Its pathway is amino-acid biosynthesis; L-asparagine biosynthesis; L-asparagine from L-aspartate (L-Gln route): step 1/1. This is Asparagine synthetase [glutamine-hydrolyzing] (ASNS) from Homo sapiens (Human).